Consider the following 441-residue polypeptide: Ribulose bisphosphate carboxylase large chain (441 aa).

Substrate contacts are provided by Asn-89 and Thr-139. The active-site Proton acceptor is Lys-141. Residue Lys-143 participates in substrate binding. 3 residues coordinate Mg(2+): Lys-167, Asp-169, and Glu-170. At Lys-167 the chain carries N6-carboxylysine. His-260 acts as the Proton acceptor in catalysis. Substrate-binding residues include Arg-261, His-293, and Ser-345.

This sequence belongs to the RuBisCO large chain family. Type I subfamily. As to quaternary structure, heterohexadecamer of 8 large chains and 8 small chains; disulfide-linked. The disulfide link is formed within the large subunit homodimers. Mg(2+) serves as cofactor. Post-translationally, the disulfide bond which can form in the large chain dimeric partners within the hexadecamer appears to be associated with oxidative stress and protein turnover.

It is found in the plastid. The protein resides in the chloroplast. The enzyme catalyses 2 (2R)-3-phosphoglycerate + 2 H(+) = D-ribulose 1,5-bisphosphate + CO2 + H2O. It carries out the reaction D-ribulose 1,5-bisphosphate + O2 = 2-phosphoglycolate + (2R)-3-phosphoglycerate + 2 H(+). RuBisCO catalyzes two reactions: the carboxylation of D-ribulose 1,5-bisphosphate, the primary event in carbon dioxide fixation, as well as the oxidative fragmentation of the pentose substrate in the photorespiration process. Both reactions occur simultaneously and in competition at the same active site. The protein is Ribulose bisphosphate carboxylase large chain of Polemonium reptans (Greek valerian).